The sequence spans 149 residues: DnaJ homolog subfamily C member 24 (149 aa).

The J domain occupies 11-82 (DWYSILGADP…ETKKEYDLQR (72 aa)). A DPH-type MB domain is found at 93-148 (VDARIYLEEMSWNEDDHSFSLSCRCGGKYSVSKDEAEEVTLISCDTCSLIIELLHY). Residues Cys-115, Cys-117, Cys-136, and Cys-139 each contribute to the Zn(2+) site.

It belongs to the DPH4 family. Monomer and homooligomer. Iron binding promotes oligomerization.

Its subcellular location is the cytoplasm. The protein resides in the cytoskeleton. It participates in protein modification; peptidyl-diphthamide biosynthesis. Its function is as follows. Stimulates the ATPase activity of several Hsp70-type chaperones. This ability is enhanced by iron-binding. The iron-bound form is redox-active and can function as electron carrier. Plays a role in the diphthamide biosynthesis, a post-translational modification of histidine which occurs in translation elongation factor 2 (EEF2). The protein is DnaJ homolog subfamily C member 24 (DNAJC24) of Bos taurus (Bovine).